We begin with the raw amino-acid sequence, 1012 residues long: AP-2 complex subunit alpha-1 (1012 aa).

4 HEAT repeats span residues 254–289, 354–391, 393–430, and 525–565; these read AMRA…VVKN, DIIK…VSNA, DIVE…DLSW, and PTIP…CIDV. Residues 652–678 form a disordered region; it reads STDPESVARSLSHPNGTLSNIDPQTPS. Over residues 663–675 the composition is skewed to polar residues; the sequence is SHPNGTLSNIDPQ. Residues 742 to 841 enclose the GAE domain; that stretch reads ALCLKDSGVL…LDFSYKFGAN (100 aa).

The protein belongs to the adaptor complexes large subunit family. As to quaternary structure, adaptor protein complex 2 (AP-2) is a heterotetramer composed of two large adaptins (alpha-type and beta-type subunits), a medium adaptin (mu-type subunit) and a small adaptin (sigma-type subunit). Binds to EPSIN2.

The protein resides in the membrane. It localises to the coated pit. Functionally, subunit of the adaptor protein complex 2 (AP-2). Adaptor protein complexes function in protein transport via transport vesicles in different membrane traffic pathways. Adaptor protein complexes are vesicle coat components and appear to be involved in cargo selection and vesicle formation. AP-2 is involved in clathrin-dependent endocytosis in which cargo proteins are incorporated into vesicles surrounded by clathrin (clathrin-coated vesicles, CCVs) which are destined for fusion with the early endosome. The complex binds polyphosphoinositides. This chain is AP-2 complex subunit alpha-1 (ALPHA-ADR), found in Arabidopsis thaliana (Mouse-ear cress).